The chain runs to 1734 residues: Gag-Pol polyprotein (1734 aa).

Residue Gly-2 is the site of N-myristoyl glycine; by host attachment. A disordered region spans residues 107-217; that stretch reads PSPTAPILPS…STTSRAFPLR (111 aa). Positions 109–112 match the PTAP/PSAP motif motif; the sequence is PTAP. Residues 128–132 carry the LYPX(n)L motif motif; sequence LYPAL. The PPXY motif motif lies at 161 to 164; that stretch reads PPPY. Ser-191 is subject to Phosphoserine; by host. The interaction with host PIAS4 stretch occupies residues 344-392; it reads GRSPTNLAKVKGITQGPNESPSAFLERLKEAYRRYTPYDPEDPGQETNV. An interaction with host UBE2I region spans residues 429 to 434; it reads IFNKRE. Basic and acidic residues-rich tracts occupy residues 434–465 and 485–498; these read ETPE…EKER and RQDR…RPQL. 2 disordered regions span residues 434-498 and 512-552; these read ETPE…RPQL and WAKD…PRIT. Residues 437 to 478 adopt a coiled-coil conformation; sequence EEREERVRRETEEKEERRRAEEEQKEKERDRRRHREMSKLLA. The CCHC-type zinc finger occupies 501–518; sequence DQCAYCKEKGHWAKDCPK. A Peptidase A2 domain is found at 560–630; the sequence is VTFLVDTGAQ…CPYPLLGRDL (71 aa). Asp-565 acts as the Protease; shared with dimeric partner in catalysis. Positions 740–931 constitute a Reverse transcriptase domain; the sequence is LDQGILVPCQ…KQVKYLGYLL (192 aa). Asp-808, Asp-882, Asp-883, Asp-1182, Glu-1220, Asp-1241, and Asp-1311 together coordinate Mg(2+). The region spanning 1173–1319 is the RNase H type-1 domain; sequence PDADHTWYTD…ADQAAREAAI (147 aa). The HHCC-type zinc finger occupies 1386–1426; it reads HRLTHLGYQKMKALLDRGESPYYMLNRDKTLQYVADSCTVC. The Integrase catalytic domain maps to 1443–1601; sequence RGHRPGSHWE…TPYEILYGAP (159 aa). Positions 1454 and 1513 each coordinate Mg(2+).

It belongs to the retroviral Pol polyprotein family. Homohexamer; further associates as homomultimer. The virus core is composed of a lattice formed from hexagonal rings, each containing six capsid monomers. As to quaternary structure, interacts (via PPXY motif) with host NEDD4. Interacts (via PSAP motif) with host TSG101. Interacts (via LYPX(n)L motif) with host PDCD6IP. In terms of assembly, the reverse transcriptase is a monomer (Potential). Interacts (via RNase domains) with host release factor ETF1; this interaction is essential for translational readthrough of amber codon between viral gag and pol genes, as well as for viral replication. Homodimer. It depends on Mg(2+) as a cofactor. In terms of processing, ubiquitinated by ITCH. Gag can recruit the ubiquitin ligase Itch in an L domain-independent manner to facilitate virus release via a mechanism that involves Gag ubiquitination. Specific enzymatic cleavages by the viral protease yield mature proteins. The protease is released by autocatalytic cleavage. The polyprotein is cleaved during and after budding, this process is termed maturation. Post-translationally, sumoylated; which is required for virus replication. In terms of processing, phosphorylated on serine residues.

It localises to the virion. The protein localises to the host cell membrane. It is found in the host late endosome membrane. Its subcellular location is the host endosome. The protein resides in the host multivesicular body. It localises to the host cytoplasm. The catalysed reaction is DNA(n) + a 2'-deoxyribonucleoside 5'-triphosphate = DNA(n+1) + diphosphate. The enzyme catalyses Endonucleolytic cleavage to 5'-phosphomonoester.. Its activity is regulated as follows. Most efficiently inhibited by Amprenavir, which is able to block Gag-Pol processing in infected cells. In terms of biological role, plays a role in budding and is processed by the viral protease during virion maturation outside the cell. During budding, it recruits, in a PPXY-dependent or independent manner, Nedd4-like ubiquitin ligases that conjugate ubiquitin molecules to Gag-Pol, or to Gag-Pol binding host factors. Interaction with HECT ubiquitin ligases probably link the viral protein to the host ESCRT pathway and facilitates release. Targets Gag and gag-pol polyproteins to the plasma membrane via a multipartite membrane binding signal, that includes its myristoylated N-terminus. Also mediates nuclear localization of the pre-integration complex. Its function is as follows. Constituent of the pre-integration complex (PIC) which tethers the latter to mitotic chromosomes. This allows the integration of the viral genome into the host DNA. Functionally, forms the spherical core of the virion that encapsulates the genomic RNA-nucleocapsid complex. In terms of biological role, involved in the packaging and encapsidation of two copies of the genome. Binds with high affinity to conserved UCUG elements within the packaging signal, located near the 5'-end of the genome. This binding is dependent on genome dimerization. Acts as a nucleic acid chaperone which is involved in rearrangement of nucleic acid secondary structures during gRNA retrotranscription. The aspartyl protease mediates proteolytic cleavages of Gag and Gag-Pol polyproteins during or shortly after the release of the virion from the plasma membrane. Cleavages take place as an ordered, step-wise cascade to yield mature proteins. This process is called maturation. Displays maximal activity during the budding process just prior to particle release from the cell (Potential). Cleaves the translation initiation factor eIF4G leading to the inhibition of host cap-dependent translation. Its function is as follows. RT is a multifunctional enzyme that converts the viral dimeric RNA genome into dsDNA in the cytoplasm, shortly after virus entry into the cell. This enzyme displays a DNA polymerase activity that can copy either DNA or RNA templates, and a ribonuclease H (RNase H) activity that cleaves the RNA strand of RNA-DNA heteroduplexes in a partially processive 3' to 5' endonucleasic mode. Conversion of viral genomic RNA into dsDNA requires many steps. A tRNA binds to the primer-binding site (PBS) situated at the 5' end of the viral RNA. RT uses the 3' end of the tRNA primer to perform a short round of RNA-dependent minus-strand DNA synthesis. The reading proceeds through the U5 region and ends after the repeated (R) region which is present at both ends of viral RNA. The portion of the RNA-DNA heteroduplex is digested by the RNase H, resulting in a ssDNA product attached to the tRNA primer. This ssDNA/tRNA hybridizes with the identical R region situated at the 3' end of viral RNA. This template exchange, known as minus-strand DNA strong stop transfer, can be either intra- or intermolecular. RT uses the 3' end of this newly synthesized short ssDNA to perform the RNA-dependent minus-strand DNA synthesis of the whole template. RNase H digests the RNA template except for a polypurine tract (PPT) situated at the 5' end of the genome. It is not clear if both polymerase and RNase H activities are simultaneous. RNase H probably can proceed both in a polymerase-dependent (RNA cut into small fragments by the same RT performing DNA synthesis) and a polymerase-independent mode (cleavage of remaining RNA fragments by free RTs). Secondly, RT performs DNA-directed plus-strand DNA synthesis using the PPT that has not been removed by RNase H as primers. PPT and tRNA primers are then removed by RNase H. The 3' and 5' ssDNA PBS regions hybridize to form a circular dsDNA intermediate. Strand displacement synthesis by RT to the PBS and PPT ends produces a blunt ended, linear dsDNA copy of the viral genome that includes long terminal repeats (LTRs) at both ends. Functionally, catalyzes viral DNA integration into the host chromosome, by performing a series of DNA cutting and joining reactions. This enzyme activity takes place after virion entry into a cell and reverse transcription of the RNA genome in dsDNA. The first step in the integration process is 3' processing. This step requires a complex comprising the viral genome, matrix protein and integrase. This complex is called the pre-integration complex (PIC). The integrase protein removes 2 nucleotides from each 3' end of the viral DNA, leaving recessed CA OH's at the 3' ends. In the second step that requires cell division, the PIC enters cell nucleus. In the third step, termed strand transfer, the integrase protein joins the previously processed 3' ends to the 5' ends of strands of target cellular DNA at the site of integration. The last step is viral DNA integration into host chromosome. The sequence is that of Gag-Pol polyprotein (pol) from AKV murine leukemia virus (AKR (endogenous) murine leukemia virus).